Reading from the N-terminus, the 129-residue chain is Trefoil factor 2 (129 aa).

The signal sequence occupies residues 1 to 23 (MGPRGLQLLAVLLALGLCAPAGA). Gln24 is subject to Pyrrolidone carboxylic acid. 2 P-type domains span residues 29–73 (CQCS…FHPL) and 79–122 (EQCV…FFPI). 7 disulfides stabilise this stretch: Cys29/Cys127, Cys31/Cys58, Cys42/Cys57, Cys52/Cys69, Cys81/Cys107, Cys91/Cys106, and Cys101/Cys118.

Its subcellular location is the secreted. Inhibits gastrointestinal motility and gastric acid secretion. Could function as a structural component of gastric mucus, possibly by stabilizing glycoproteins in the mucus gel through interactions with carbohydrate side chains. The protein is Trefoil factor 2 (TFF2) of Canis lupus familiaris (Dog).